Reading from the N-terminus, the 362-residue chain is Peptide chain release factor 1 (362 aa).

Residue Gln-237 is modified to N5-methylglutamine.

Belongs to the prokaryotic/mitochondrial release factor family. Methylated by PrmC. Methylation increases the termination efficiency of RF1.

Its subcellular location is the cytoplasm. Functionally, peptide chain release factor 1 directs the termination of translation in response to the peptide chain termination codons UAG and UAA. This Aquifex aeolicus (strain VF5) protein is Peptide chain release factor 1 (prfA).